Here is a 235-residue protein sequence, read N- to C-terminus: CD-NTase-associated protein 13 (235 aa).

2 helical membrane passes run 14–34 (IVHH…LIWI) and 45–65 (IIFT…IVGL).

This sequence in the C-terminal section; belongs to the bacterial STING family. In terms of assembly, homodimer.

The protein resides in the cell inner membrane. Its function is as follows. Effector protein of a CBASS antivirus system. CBASS (cyclic oligonucleotide-based antiphage signaling system) provides immunity against bacteriophage. The CD-NTase protein synthesizes cyclic nucleotides in response to infection; these serve as specific second messenger signals. The signals activate a diverse range of effectors, leading to bacterial cell death and thus abortive phage infection. A type I-D(GG) CBASS system. Functionally, binds cyclic dinucleotides: binds c-di-GMP (synthesized by the cognate CdnE encoded upstream in the same operon), cyclic 3'3'-cyclic GMP-AMP (3'3'-cGAMP) but not cUMP-AMP. The effector protein for this CBASS system, its activity is stimulated by c-di-GMP and leads to cell death. This Flavobacteriaceae sp. genome_bin_11 protein is CD-NTase-associated protein 13.